Here is a 72-residue protein sequence, read N- to C-terminus: UPF0154 protein BPUM_1692 (72 aa).

Residues 4–24 traverse the membrane as a helical segment; it reads WVVILVGVVALLAGVALGFFI.

Belongs to the UPF0154 family.

It is found in the cell membrane. The chain is UPF0154 protein BPUM_1692 from Bacillus pumilus (strain SAFR-032).